Consider the following 595-residue polypeptide: Phenylalanine--tRNA ligase beta subunit (595 aa).

Residues 86–90 (KLSKP) are 3'-CCA residue in tRNA. The B5 domain occupies 292 to 370 (FNDRIMDVSI…VGYGFNNLPK (79 aa)). Mg(2+) is bound by residues D348, D354, E357, and D358.

The protein belongs to the phenylalanyl-tRNA synthetase beta subunit family. Type 2 subfamily. As to quaternary structure, tetramer of two alpha and two beta subunits. Mg(2+) is required as a cofactor.

Its subcellular location is the cytoplasm. The enzyme catalyses tRNA(Phe) + L-phenylalanine + ATP = L-phenylalanyl-tRNA(Phe) + AMP + diphosphate + H(+). This chain is Phenylalanine--tRNA ligase beta subunit (FRS1), found in Saccharomyces cerevisiae (strain ATCC 204508 / S288c) (Baker's yeast).